The sequence spans 119 residues: Ribonuclease P protein component (119 aa).

This sequence belongs to the RnpA family. In terms of assembly, consists of a catalytic RNA component (M1 or rnpB) and a protein subunit.

It carries out the reaction Endonucleolytic cleavage of RNA, removing 5'-extranucleotides from tRNA precursor.. RNaseP catalyzes the removal of the 5'-leader sequence from pre-tRNA to produce the mature 5'-terminus. It can also cleave other RNA substrates such as 4.5S RNA. The protein component plays an auxiliary but essential role in vivo by binding to the 5'-leader sequence and broadening the substrate specificity of the ribozyme. The sequence is that of Ribonuclease P protein component from Klebsiella pneumoniae (strain 342).